Consider the following 54-residue polypeptide: uncharacterized protein (54 aa).

This is an uncharacterized protein from Rhizobium etli.